Here is a 385-residue protein sequence, read N- to C-terminus: Transcription termination factor 2, mitochondrial (385 aa).

The transit peptide at 1–35 (MPWRLPTGHQLCRLCLLRKPRPALKIKPSSACVTY) directs the protein to the mitochondrion.

This sequence belongs to the mTERF family. As to quaternary structure, monomer.

The protein resides in the mitochondrion matrix. Its subcellular location is the mitochondrion nucleoid. Functionally, binds mitochondrial DNA and plays a role in the regulation of transcription of mitochondrial mRNA and rRNA species. In Mus musculus (Mouse), this protein is Transcription termination factor 2, mitochondrial (Mterf2).